A 749-amino-acid chain; its full sequence is EF-hand domain-containing family member C2 (749 aa).

DM10 domains lie at 75–182, 226–368, and 431–538; these read DKQV…RKIG, HGKI…KSKY, and KSNI…EQNT. One can recognise an EF-hand domain in the interval 558-593; sequence GKSRELKQVFKAADSKHTNMVDYNTFRDILMSLTVG.

As to quaternary structure, microtubule inner protein component of sperm flagellar doublet microtubules. In terms of tissue distribution, expressed in airway epithelial cells.

The protein localises to the cytoplasm. It is found in the cytoskeleton. Its subcellular location is the cilium axoneme. The protein resides in the flagellum axoneme. Functionally, microtubule inner protein (MIP) part of the dynein-decorated doublet microtubules (DMTs) in cilia axoneme, which is required for motile cilia beating. This chain is EF-hand domain-containing family member C2, found in Homo sapiens (Human).